Reading from the N-terminus, the 575-residue chain is Homocysteine/cysteine synthase (575 aa).

At lysine 376 the chain carries N6-(pyridoxal phosphate)lysine.

It belongs to the trans-sulfuration enzymes family. MET7 subfamily. It depends on pyridoxal 5'-phosphate as a cofactor.

The protein localises to the cytoplasm. The enzyme catalyses O-acetyl-L-homoserine + methanethiol = L-methionine + acetate + H(+). It catalyses the reaction O-acetyl-L-homoserine + hydrogen sulfide = L-homocysteine + acetate. It carries out the reaction O-acetyl-L-serine + hydrogen sulfide = L-cysteine + acetate. The protein operates within amino-acid biosynthesis; L-methionine biosynthesis via de novo pathway; L-homocysteine from O-acetyl-L-homoserine. Functionally, plays a role in inorganic sulfur assimilation during sulfur-limited conditions; catalyzes the conversion of O-acetyl-L-homoserine (OAH) into homocysteine in the methionine biosynthesis pathway. Also catalyzes the conversion of O-acetylserine (OAS) into cysteine, the last step in the cysteine biosynthesis pathway. However, it seems that in S.cerevisiae cysteine biosynthesis occurs exclusively through the cystathionine pathway and not via direct incorporation of sulfur into OAS. It therefore has no metabolic role in cysteine biosynthesis and may only have a regulatory role controlling OAS levels. The chain is Homocysteine/cysteine synthase from Saccharomyces cerevisiae (strain ATCC 204508 / S288c) (Baker's yeast).